A 569-amino-acid chain; its full sequence is Ribonuclease J (569 aa).

Residues His81, His83, Asp85, His86, His150, and Asp172 each coordinate Zn(2+). 373–377 contributes to the substrate binding site; it reads HASGH. His399 is a binding site for Zn(2+).

It belongs to the metallo-beta-lactamase superfamily. RNA-metabolizing metallo-beta-lactamase-like family. Bacterial RNase J subfamily. Homodimer, may be a subunit of the RNA degradosome. The cofactor is Zn(2+).

It is found in the cytoplasm. In terms of biological role, an RNase that has 5'-3' exonuclease and possibly endoonuclease activity. Involved in maturation of rRNA and in some organisms also mRNA maturation and/or decay. This Mycoplasma pneumoniae (strain ATCC 29342 / M129 / Subtype 1) (Mycoplasmoides pneumoniae) protein is Ribonuclease J.